A 463-amino-acid chain; its full sequence is Argininosuccinate lyase (463 aa).

2-(N(omega)-L-arginino)succinate is bound by residues serine 27, asparagine 115, and threonine 161. Histidine 162 acts as the Proton acceptor in catalysis. The active-site Proton donor is serine 283. The 2-(N(omega)-L-arginino)succinate site is built by asparagine 291, tyrosine 323, glutamine 328, and lysine 331.

Belongs to the lyase 1 family. Argininosuccinate lyase subfamily. Homotetramer.

It catalyses the reaction 2-(N(omega)-L-arginino)succinate = fumarate + L-arginine. Its pathway is amino-acid biosynthesis; L-arginine biosynthesis; L-arginine from L-ornithine and carbamoyl phosphate: step 3/3. This is Argininosuccinate lyase (ARG4) from Saccharomyces paradoxus (Yeast).